A 112-amino-acid chain; its full sequence is Small ribosomal subunit protein bS6c (112 aa).

It belongs to the bacterial ribosomal protein bS6 family.

The protein localises to the plastid. Its subcellular location is the chloroplast. In terms of biological role, binds together with bS18 to 16S ribosomal RNA. In Porphyra purpurea (Red seaweed), this protein is Small ribosomal subunit protein bS6c (rps6).